Reading from the N-terminus, the 225-residue chain is NAD(P)H-quinone oxidoreductase subunit K, chloroplastic (225 aa).

The [4Fe-4S] cluster site is built by Cys-43, Cys-44, Cys-108, and Cys-139.

It belongs to the complex I 20 kDa subunit family. As to quaternary structure, NDH is composed of at least 16 different subunits, 5 of which are encoded in the nucleus. Requires [4Fe-4S] cluster as cofactor.

Its subcellular location is the plastid. It localises to the chloroplast thylakoid membrane. The enzyme catalyses a plastoquinone + NADH + (n+1) H(+)(in) = a plastoquinol + NAD(+) + n H(+)(out). The catalysed reaction is a plastoquinone + NADPH + (n+1) H(+)(in) = a plastoquinol + NADP(+) + n H(+)(out). NDH shuttles electrons from NAD(P)H:plastoquinone, via FMN and iron-sulfur (Fe-S) centers, to quinones in the photosynthetic chain and possibly in a chloroplast respiratory chain. The immediate electron acceptor for the enzyme in this species is believed to be plastoquinone. Couples the redox reaction to proton translocation, and thus conserves the redox energy in a proton gradient. This chain is NAD(P)H-quinone oxidoreductase subunit K, chloroplastic, found in Lolium perenne (Perennial ryegrass).